The primary structure comprises 705 residues: Endoglucanase (705 aa).

Positions 1 to 23 (MKILKNCILLIIFGLLSTQLINA) are cleaved as a signal peptide. Asn75 is a glycosylation site (N-linked (GlcNAc...) asparagine). The Nucleophile role is filled by Asp85. Active-site residues include His390, Asp428, and Glu437. The disordered stretch occupies residues 455-556 (NPSSTSVPTT…TPTETPSSGE (102 aa)). The span at 462-552 (PTTTPTVTET…TPTVTPTETP (91 aa)) shows a compositional bias: low complexity. Positions 463-552 (TTTPTVTETP…TPTVTPTETP (90 aa)) are pro/Thr repeats ('hinge') (Pro/Thr box).

It belongs to the glycosyl hydrolase 9 (cellulase E) family.

It catalyses the reaction Endohydrolysis of (1-&gt;4)-beta-D-glucosidic linkages in cellulose, lichenin and cereal beta-D-glucans.. Functionally, may digest the spore cell wall during germination, to release the enclosed amoeba. This Dictyostelium discoideum (Social amoeba) protein is Endoglucanase (celA).